The primary structure comprises 1482 residues: Chromosome partition protein MukB (1482 aa).

34 to 41 (GGNGAGKS) lines the ATP pocket. Coiled-coil stretches lie at residues 337 to 468 (LNLV…LSVA), 509 to 604 (QHLA…APIW), 780 to 805 (RAAR…ATLS), 835 to 1044 (EAEI…ELVD), 1070 to 1115 (TNRA…TAKA), and 1210 to 1265 (EAIE…LQAV). A flexible hinge region spans residues 666-783 (PGGAEDQRLV…AVPLFGRAAR (118 aa)).

It belongs to the SMC family. MukB subfamily. As to quaternary structure, homodimerization via its hinge domain. Binds to DNA via its C-terminal region. Interacts, and probably forms a ternary complex, with MukE and MukF via its C-terminal region. The complex formation is stimulated by calcium or magnesium. Interacts with tubulin-related protein FtsZ.

It is found in the cytoplasm. The protein resides in the nucleoid. In terms of biological role, plays a central role in chromosome condensation, segregation and cell cycle progression. Functions as a homodimer, which is essential for chromosome partition. Involved in negative DNA supercoiling in vivo, and by this means organize and compact chromosomes. May achieve or facilitate chromosome segregation by condensation DNA from both sides of a centrally located replisome during cell division. In Serratia proteamaculans (strain 568), this protein is Chromosome partition protein MukB.